The chain runs to 238 residues: uncharacterized protein (238 aa).

The next 7 membrane-spanning stretches (helical) occupy residues 19–39 (FIYG…LLGW), 64–84 (WSVI…IYNW), 85–105 (QVLY…YFTK), 112–132 (LWND…SYYF), 141–161 (ILWV…YVKS), 176–196 (VIFH…ILAL), and 218–238 (VGLI…VATL).

It to B.subtilis YwiC.

The protein resides in the cell membrane. This is an uncharacterized protein from Haemophilus influenzae (strain ATCC 51907 / DSM 11121 / KW20 / Rd).